A 487-amino-acid polypeptide reads, in one-letter code: b(0,+)-type amino acid transporter 1 (487 aa).

The disordered stretch occupies residues 1–22 (MGETVPRRRREDEKSIQSDEPK). At 1–31 (MGETVPRRRREDEKSIQSDEPKTTSLQKEVG) the chain is on the cytoplasmic side. Ser-18 is modified (phosphoserine). Residues 32 to 55 (LISGICIIVGTIIGSGIFISPKSV) form a helical membrane-spanning segment. 43–47 (IIGSG) is an L-arginine binding site. Topologically, residues 56-62 (LSNTQAV) are extracellular. A helical transmembrane segment spans residues 63–84 (GPCLIIWAACGVLGTLGALCFA). Topologically, residues 85-110 (ELGTMITKSGGEYPYLMEAFGPIPAY) are cytoplasmic. Residues 111-137 (LFSWSSLLVMKPSSFAIICLSFSEYVA) form a helical membrane-spanning segment. The Extracellular portion of the chain corresponds to 138-147 (TPFYSGCEPP). The next 2 helical transmembrane spans lie at 148–169 (KVVVKCLAAAAIMLITTVNSLS) and 170–193 (VRLGSYVQNFFTAAKLVIVAIIII). The Extracellular portion of the chain corresponds to 194–217 (SGLVLLAQGNTKNFENSFEGAEVS). Residues 218 to 238 (VGAISLALYNGLWAYDGWNQL) form a helical membrane-spanning segment. Residue Asp-233 coordinates L-arginine. The Cytoplasmic portion of the chain corresponds to 239 to 251 (NYITEELRNPFRN). A helical transmembrane segment spans residues 252–274 (LPLAIIFGIPLVTVCYILINISY). The Extracellular portion of the chain corresponds to 275–302 (FTVMTPTELLQSQAVAVTFGDRVLYPAS). Residues 303–325 (WIVPVFVAFSTIGAANGTCFTAG) traverse the membrane as a helical segment. Topologically, residues 326–351 (RLVYVAGREGHMLKVLSYISVRRLTP) are cytoplasmic. The next 2 membrane-spanning stretches (helical) occupy residues 352–370 (APAIIFYGIVATIYIIPGD) and 371–391 (INSLVNYFSFATWLFYGLTIL). Residues 392–410 (GLIVMRFTRKELERPIKVP) are Cytoplasmic-facing. Residues 411–431 (IFIPILVTFIAAFLVLAPVIT) form a helical membrane-spanning segment. The Extracellular segment spans residues 432–434 (NPA). A helical transmembrane segment spans residues 435 to 450 (WEYLYCVLFILSGLVF). The Cytoplasmic portion of the chain corresponds to 451–487 (YFLFVYYKFEWAQKISKPITMHLQMLMEVVPPEPDPK).

Belongs to the amino acid-polyamine-organocation (APC) superfamily. As to quaternary structure, disulfide-linked heterodimer composed of the catalytic light chain subunit SLC7A9 and the heavy chain subunit. The heterodimer is the minimal functional unit. Assembles in heterotetramers (dimers of heterodimers) and higher order oligomers. Interacts with CAV1. In terms of tissue distribution, kidney and small intestine.

The protein resides in the apical cell membrane. It catalyses the reaction L-leucine(out) + L-arginine(in) = L-leucine(in) + L-arginine(out). It carries out the reaction L-histidine(out) + L-arginine(in) = L-histidine(in) + L-arginine(out). The catalysed reaction is L-arginine(in) + L-phenylalanine(out) = L-arginine(out) + L-phenylalanine(in). The enzyme catalyses L-cysteine(out) + L-arginine(in) = L-cysteine(in) + L-arginine(out). It catalyses the reaction L-cystine(out) + L-arginine(in) = L-cystine(in) + L-arginine(out). It carries out the reaction L-lysine(out) + L-arginine(in) = L-lysine(in) + L-arginine(out). Mediates the electrogenic exchange between cationic amino acids and neutral amino acids, with a stoichiometry of 1:1. Has system b(0,+)-like activity with high affinity for extracellular cationic amino acids and L-cystine and lower affinity for intracellular neutral amino acids. Substrate exchange is driven by high concentration of intracellular neutral amino acids and the intracellular reduction of L-cystine to L-cysteine. Required for reabsorption of L-cystine and dibasic amino acids across the brush border membrane in renal proximal tubules. The chain is b(0,+)-type amino acid transporter 1 from Oryctolagus cuniculus (Rabbit).